The sequence spans 447 residues: MIRNVIIGLLAVAVIATGYWGFQEQQQSQILTVQAENGYQRAFHELAYHIDQIEDQLGATMAMNTRRQLTPSLAEVWRLTSLASEEIGQLPLGIVDLSKTEEFLHHLGTFSYKTSIRDLDKEPLTDEEYEKLEKFHDYSKTIKNDLRKTQAMTLKKDMRWLDLNKEFQAQDEPLDNAIVDGFRTMDEHVKGASEVEWGPGMVIRNDHEKKLEKRLEKRKITEEEAKEIALSYVDMEQATDVIVSETGDGLDMYSVIIDDPERQAHYYLDMTQQGGHPIWFLQERQINEQNISLNEASNKAQEFLEEHDKENMQLVDSKQYDSIGVFEFVYLEDNVRVYPDTIKVEVALDEGDIIGYEAMSYLVNHHDRDLEEPELTADEARERLNPRLEVMEDHIALIQNDLGEEVLCYEFFGVINDETYRIYINAEDGEEEKVEKMQEAEPVYDFD.

The protein belongs to the YpeB family.

Its function is as follows. Required for spore cortex hydrolysis during germination. Appears to be required for either expression, localization, activation or function of SleB. The protein is Sporulation protein YpeB of Halalkalibacterium halodurans (strain ATCC BAA-125 / DSM 18197 / FERM 7344 / JCM 9153 / C-125) (Bacillus halodurans).